A 302-amino-acid chain; its full sequence is Sulfate adenylyltransferase subunit 2 (302 aa).

It belongs to the PAPS reductase family. CysD subfamily. In terms of assembly, heterodimer composed of CysD, the smaller subunit, and CysN.

The enzyme catalyses sulfate + ATP + H(+) = adenosine 5'-phosphosulfate + diphosphate. The protein operates within sulfur metabolism; hydrogen sulfide biosynthesis; sulfite from sulfate: step 1/3. With CysN forms the ATP sulfurylase (ATPS) that catalyzes the adenylation of sulfate producing adenosine 5'-phosphosulfate (APS) and diphosphate, the first enzymatic step in sulfur assimilation pathway. APS synthesis involves the formation of a high-energy phosphoric-sulfuric acid anhydride bond driven by GTP hydrolysis by CysN coupled to ATP hydrolysis by CysD. This is Sulfate adenylyltransferase subunit 2 from Sodalis glossinidius (strain morsitans).